A 329-amino-acid chain; its full sequence is Ribonucleoside-diphosphate reductase subunit beta (329 aa).

Fe cation contacts are provided by aspartate 66, glutamate 97, and histidine 101. The active site involves tyrosine 105. Glutamate 164, glutamate 198, and histidine 201 together coordinate Fe cation.

It belongs to the ribonucleoside diphosphate reductase small chain family. As to quaternary structure, tetramer of two alpha and two beta subunits. Fe cation serves as cofactor.

The enzyme catalyses a 2'-deoxyribonucleoside 5'-diphosphate + [thioredoxin]-disulfide + H2O = a ribonucleoside 5'-diphosphate + [thioredoxin]-dithiol. Provides the precursors necessary for DNA synthesis. Catalyzes the biosynthesis of deoxyribonucleotides from the corresponding ribonucleotides. This chain is Ribonucleoside-diphosphate reductase subunit beta (bnrdF), found in Bacillus pumilus (Bacillus mesentericus).